Reading from the N-terminus, the 230-residue chain is Large ribosomal subunit protein uL1 (230 aa).

Belongs to the universal ribosomal protein uL1 family. As to quaternary structure, part of the 50S ribosomal subunit.

Its function is as follows. Binds directly to 23S rRNA. The L1 stalk is quite mobile in the ribosome, and is involved in E site tRNA release. Functionally, protein L1 is also a translational repressor protein, it controls the translation of the L11 operon by binding to its mRNA. This chain is Large ribosomal subunit protein uL1, found in Staphylococcus aureus (strain Mu3 / ATCC 700698).